The following is a 143-amino-acid chain: Large ribosomal subunit protein uL13 (143 aa).

This sequence belongs to the universal ribosomal protein uL13 family. As to quaternary structure, part of the 50S ribosomal subunit.

Functionally, this protein is one of the early assembly proteins of the 50S ribosomal subunit, although it is not seen to bind rRNA by itself. It is important during the early stages of 50S assembly. In Solibacter usitatus (strain Ellin6076), this protein is Large ribosomal subunit protein uL13.